The sequence spans 101 residues: DNA-binding protein Fis (101 aa).

The H-T-H motif DNA-binding region spans 77-96 (QTRAANMLGINRGTLRKKLK).

It belongs to the transcriptional regulatory Fis family. Homodimer.

Functionally, activates ribosomal RNA transcription. Plays a direct role in upstream activation of rRNA promoters. The sequence is that of DNA-binding protein Fis from Shewanella pealeana (strain ATCC 700345 / ANG-SQ1).